Consider the following 191-residue polypeptide: 3-isopropylmalate dehydratase small subunit (191 aa).

The protein belongs to the LeuD family. LeuD type 1 subfamily. In terms of assembly, heterodimer of LeuC and LeuD.

It catalyses the reaction (2R,3S)-3-isopropylmalate = (2S)-2-isopropylmalate. It functions in the pathway amino-acid biosynthesis; L-leucine biosynthesis; L-leucine from 3-methyl-2-oxobutanoate: step 2/4. Its function is as follows. Catalyzes the isomerization between 2-isopropylmalate and 3-isopropylmalate, via the formation of 2-isopropylmaleate. The protein is 3-isopropylmalate dehydratase small subunit of Lactococcus lactis subsp. cremoris (strain MG1363).